The chain runs to 111 residues: Probable 4-amino-4-deoxy-L-arabinose-phosphoundecaprenol flippase subunit ArnE (111 aa).

Transmembrane regions (helical) follow at residues 38–58 (LWLG…LLVL), 61–81 (LPVG…TLAA), and 91–111 (PRHW…GSAA). The 70-residue stretch at 40–109 (LGLALICMGA…IISGIIILGS (70 aa)) folds into the EamA domain.

It belongs to the ArnE family. Heterodimer of ArnE and ArnF.

It is found in the cell inner membrane. It participates in bacterial outer membrane biogenesis; lipopolysaccharide biosynthesis. Functionally, translocates 4-amino-4-deoxy-L-arabinose-phosphoundecaprenol (alpha-L-Ara4N-phosphoundecaprenol) from the cytoplasmic to the periplasmic side of the inner membrane. This chain is Probable 4-amino-4-deoxy-L-arabinose-phosphoundecaprenol flippase subunit ArnE, found in Salmonella agona (strain SL483).